Here is a 420-residue protein sequence, read N- to C-terminus: D-tagatose-1,6-bisphosphate aldolase subunit GatZ (420 aa).

Belongs to the GatZ/KbaZ family. GatZ subfamily. In terms of assembly, forms a complex with GatY.

It participates in carbohydrate metabolism; D-tagatose 6-phosphate degradation; D-glyceraldehyde 3-phosphate and glycerone phosphate from D-tagatose 6-phosphate: step 2/2. Its function is as follows. Component of the tagatose-1,6-bisphosphate aldolase GatYZ that is required for full activity and stability of the Y subunit. Could have a chaperone-like function for the proper and stable folding of GatY. When expressed alone, GatZ does not show any aldolase activity. Is involved in the catabolism of galactitol. This is D-tagatose-1,6-bisphosphate aldolase subunit GatZ from Escherichia coli (strain SE11).